The following is a 209-amino-acid chain: Uracil phosphoribosyltransferase (209 aa).

Residues Arg79, Arg104, and 131–139 (DPMLATGGS) each bind 5-phospho-alpha-D-ribose 1-diphosphate. Residues Ile194 and 199–201 (GDA) contribute to the uracil site. Position 200 (Asp200) interacts with 5-phospho-alpha-D-ribose 1-diphosphate.

It belongs to the UPRTase family. Homodimer. It depends on Mg(2+) as a cofactor.

The enzyme catalyses UMP + diphosphate = 5-phospho-alpha-D-ribose 1-diphosphate + uracil. The protein operates within pyrimidine metabolism; UMP biosynthesis via salvage pathway; UMP from uracil: step 1/1. With respect to regulation, allosterically activated by GTP. Its function is as follows. Catalyzes the conversion of uracil and 5-phospho-alpha-D-ribose 1-diphosphate (PRPP) to UMP and diphosphate. In Bacillus caldolyticus, this protein is Uracil phosphoribosyltransferase.